The sequence spans 98 residues: Large ribosomal subunit protein uL23 (98 aa).

The protein belongs to the universal ribosomal protein uL23 family. In terms of assembly, part of the 50S ribosomal subunit. Contacts protein L29, and trigger factor when it is bound to the ribosome.

Functionally, one of the early assembly proteins it binds 23S rRNA. One of the proteins that surrounds the polypeptide exit tunnel on the outside of the ribosome. Forms the main docking site for trigger factor binding to the ribosome. This is Large ribosomal subunit protein uL23 from Sorangium cellulosum (strain So ce56) (Polyangium cellulosum (strain So ce56)).